We begin with the raw amino-acid sequence, 529 residues long: Cytochrome P450 monooxygenase ausG (529 aa).

Residues 31-51 form a helical membrane-spanning segment; that stretch reads FLVTCGLPWLLLLFSVTIILF. Cys470 provides a ligand contact to heme.

Belongs to the cytochrome P450 family. Heme serves as cofactor.

The protein localises to the membrane. It functions in the pathway secondary metabolite biosynthesis; terpenoid biosynthesis. Its function is as follows. Cytochrome P450 monooxygenase; part of the gene cluster B that mediates the biosynthesis of austinol and dehydroaustinol, two fungal meroterpenoids. The first step of the pathway is the synthesis of 3,5-dimethylorsellinic acid by the polyketide synthase ausA. 3,5-dimethylorsellinic acid is then prenylated by the polyprenyl transferase ausN. Further epoxidation by the FAD-dependent monooxygenase ausM and cyclization by the probable terpene cyclase ausL lead to the formation of protoaustinoid A. Protoaustinoid A is then oxidized to spiro-lactone preaustinoid A3 by the combined action of the FAD-binding monooxygenases ausB and ausC, and the dioxygenase ausE. Acid-catalyzed keto-rearrangement and ring contraction of the tetraketide portion of preaustinoid A3 by ausJ lead to the formation of preaustinoid A4. The aldo-keto reductase ausK, with the help of ausH, is involved in the next step by transforming preaustinoid A4 into isoaustinone which is in turn hydroxylated by the P450 monooxygenase ausI to form austinolide. Finally, the cytochrome P450 monooxygenase ausG modifies austinolide to austinol. Austinol can be further modified to dehydroaustinol which forms a diffusible complex with diorcinol that initiates conidiation. Due to genetic rearrangements of the clusters and the subsequent loss of some enzymes, the end products of the Emericella nidulans austinoid biosynthesis clusters are austinol and dehydroaustinol, even if additional enzymes, such as the O-acetyltransferase ausQ and the cytochrome P450 monooxygenase ausR are still functional. This is Cytochrome P450 monooxygenase ausG from Emericella nidulans (strain FGSC A4 / ATCC 38163 / CBS 112.46 / NRRL 194 / M139) (Aspergillus nidulans).